The sequence spans 356 residues: Phospho-N-acetylmuramoyl-pentapeptide-transferase (356 aa).

10 consecutive transmembrane segments (helical) span residues 27–47, 73–93, 97–117, 138–158, 165–185, 195–215, 232–252, 258–278, 284–304, and 333–353; these read ATLM…INML, TMGG…WMDL, FVWA…LDDL, FLVA…WLYV, AIPL…GAGN, GLAI…AYLA, AGEL…FLWF, AVFM…AIAV, IVLA…IIQV, and KVVI…LATL.

It belongs to the glycosyltransferase 4 family. MraY subfamily. The cofactor is Mg(2+).

It is found in the cell inner membrane. The enzyme catalyses UDP-N-acetyl-alpha-D-muramoyl-L-alanyl-gamma-D-glutamyl-meso-2,6-diaminopimeloyl-D-alanyl-D-alanine + di-trans,octa-cis-undecaprenyl phosphate = di-trans,octa-cis-undecaprenyl diphospho-N-acetyl-alpha-D-muramoyl-L-alanyl-D-glutamyl-meso-2,6-diaminopimeloyl-D-alanyl-D-alanine + UMP. It participates in cell wall biogenesis; peptidoglycan biosynthesis. Its function is as follows. Catalyzes the initial step of the lipid cycle reactions in the biosynthesis of the cell wall peptidoglycan: transfers peptidoglycan precursor phospho-MurNAc-pentapeptide from UDP-MurNAc-pentapeptide onto the lipid carrier undecaprenyl phosphate, yielding undecaprenyl-pyrophosphoryl-MurNAc-pentapeptide, known as lipid I. This Erythrobacter litoralis (strain HTCC2594) protein is Phospho-N-acetylmuramoyl-pentapeptide-transferase.